The sequence spans 113 residues: Hydrogenase maturation factor HybF (113 aa).

Positions 2 and 3 each coordinate Ni(2+). 4 residues coordinate Zn(2+): Cys73, Cys76, Cys89, and Cys92.

The protein belongs to the HypA/HybF family. HybF subfamily.

Functionally, involved in the maturation of [NiFe] hydrogenases. Required for nickel insertion into the metal center of the hydrogenase. This is Hydrogenase maturation factor HybF from Escherichia coli O157:H7.